Reading from the N-terminus, the 60-residue chain is Large ribosomal subunit protein bL33 (60 aa).

Belongs to the bacterial ribosomal protein bL33 family.

The sequence is that of Large ribosomal subunit protein bL33 from Cytophaga hutchinsonii (strain ATCC 33406 / DSM 1761 / CIP 103989 / NBRC 15051 / NCIMB 9469 / D465).